Reading from the N-terminus, the 732-residue chain is Anthranilate synthase (732 aa).

Residues 533-728 (RVLLVDHDDS…MDRLAAGALT (196 aa)) form the Glutamine amidotransferase type-1 domain. 583-585 (GPG) lines the L-glutamine pocket. The active-site Nucleophile; for GATase activity is Cys610. L-glutamine contacts are provided by residues Gln614 and 660–661 (SL). Residues His699 and Glu701 each act as for GATase activity in the active site.

The catalysed reaction is chorismate + L-glutamine = anthranilate + pyruvate + L-glutamate + H(+). Its pathway is amino-acid biosynthesis; L-tryptophan biosynthesis; L-tryptophan from chorismate: step 1/5. This is Anthranilate synthase (trpE(G)) from Azospirillum brasilense.